The primary structure comprises 388 residues: Chorismate synthase (388 aa).

NADP(+) contacts are provided by Arg39 and Arg45. FMN is bound by residues 130-132, 251-252, Gly296, 311-315, and Arg337; these read RSS, NA, and KPIPT.

Belongs to the chorismate synthase family. In terms of assembly, homotetramer. The cofactor is FMNH2.

The catalysed reaction is 5-O-(1-carboxyvinyl)-3-phosphoshikimate = chorismate + phosphate. It participates in metabolic intermediate biosynthesis; chorismate biosynthesis; chorismate from D-erythrose 4-phosphate and phosphoenolpyruvate: step 7/7. Catalyzes the anti-1,4-elimination of the C-3 phosphate and the C-6 proR hydrogen from 5-enolpyruvylshikimate-3-phosphate (EPSP) to yield chorismate, which is the branch point compound that serves as the starting substrate for the three terminal pathways of aromatic amino acid biosynthesis. This reaction introduces a second double bond into the aromatic ring system. This chain is Chorismate synthase, found in Streptococcus uberis (strain ATCC BAA-854 / 0140J).